Reading from the N-terminus, the 363-residue chain is NAD(P)H-quinone oxidoreductase subunit 1, chloroplastic (363 aa).

6 consecutive transmembrane segments (helical) span residues 30 to 50, 104 to 124, 127 to 147, 253 to 273, 300 to 320, and 343 to 363; these read LVPI…IVWL, IAVI…HLVL, LGIG…GLLM, FGLF…FVTV, VFGT…FLFI, and FLLP…LLSL.

It belongs to the complex I subunit 1 family. In terms of assembly, NDH is composed of at least 16 different subunits, 5 of which are encoded in the nucleus.

It is found in the plastid. The protein localises to the chloroplast thylakoid membrane. It carries out the reaction a plastoquinone + NADH + (n+1) H(+)(in) = a plastoquinol + NAD(+) + n H(+)(out). The enzyme catalyses a plastoquinone + NADPH + (n+1) H(+)(in) = a plastoquinol + NADP(+) + n H(+)(out). NDH shuttles electrons from NAD(P)H:plastoquinone, via FMN and iron-sulfur (Fe-S) centers, to quinones in the photosynthetic chain and possibly in a chloroplast respiratory chain. The immediate electron acceptor for the enzyme in this species is believed to be plastoquinone. Couples the redox reaction to proton translocation, and thus conserves the redox energy in a proton gradient. In Piper cenocladum (Ant piper), this protein is NAD(P)H-quinone oxidoreductase subunit 1, chloroplastic.